The sequence spans 338 residues: Envelope glycoprotein K (338 aa).

The N-terminal stretch at 1–30 is a signal peptide; the sequence is MLAVRSLQHLSTVVLITAYGLVLVWYTVFG. Topologically, residues 31-121 are extracellular; sequence ASPLHRCIYA…VNCLETLWYT (91 aa). The interval 31–121 is involved in fusion; that stretch reads ASPLHRCIYA…VNCLETLWYT (91 aa). Residues N48 and N58 are each glycosylated (N-linked (GlcNAc...) asparagine; by host). A helical membrane pass occupies residues 122-140; it reads RVRLVVVGWFLYLAFVALH. Over 141-212 the chain is Cytoplasmic; that stretch reads QRRCMFGVVS…DPVTFLYHRP (72 aa). The helical transmembrane segment at 213 to 233 threads the bilayer; the sequence is AIGVIVGCELIVRFVAVGLIV. Residues 234–243 are Extracellular-facing; that stretch reads GTAFISRGAC. A helical transmembrane segment spans residues 244–264; the sequence is AITYPLFLTITTWCFVSTIGL. At 265–301 the chain is on the cytoplasmic side; that stretch reads TELYCILRRGPAPKNADKAAAPGRSKGLSGVCGRCCS. Residues 265-301 are interaction with UL20; it reads TELYCILRRGPAPKNADKAAAPGRSKGLSGVCGRCCS. A helical transmembrane segment spans residues 302–322; the sequence is IILSGIAMRLCYIAVVAGVVL. Over 323 to 338 the chain is Extracellular; the sequence is VALHYEQEIQRRLFDV.

This sequence belongs to the alphaherpesvirinae glycoprotein K family. In terms of assembly, interacts (via UL20 interaction region) with protein UL20 (via N-terminus); this interaction probably plays a role in the coordinate transport of protein UL20 and gK to the trans-Golgi network (TGN), and is required for the cell surface expression of gK. In terms of processing, N-glycosylated.

It is found in the host cell membrane. The protein localises to the host endosome membrane. Its subcellular location is the host Golgi apparatus membrane. Functionally, glycoprotein that probably modulates membrane fusion events during secondary envelopment of cytoplasmic capsids that bud into specific trans-Golgi network (TGN)-derived membranes. Also plays a role, together with gB, in virus-induced cell-to-cell fusion (syncytia formation). Seems to block fusion of virions with infected-cell membranes. The sequence is that of Envelope glycoprotein K (gK) from Homo sapiens (Human).